A 199-amino-acid chain; its full sequence is NAD(P)H dehydrogenase (quinone) (199 aa).

The region spanning 4–190 is the Flavodoxin-like domain; sequence MLVLYYSAYG…DGARFQGRRV (187 aa). Residues 10–15 and 78–80 each bind FMN; these read SAYGHM and TRY. Y12 serves as a coordination point for NAD(+). Substrate is bound at residue W98. FMN contacts are provided by residues 113–119 and H134; that span reads STATQYG. The disordered stretch occupies residues 162–181; that stretch reads GMTTTADGDGSRQPSAQELD. Positions 163-177 are enriched in polar residues; that stretch reads MTTTADGDGSRQPSA.

It belongs to the WrbA family. FMN is required as a cofactor.

It catalyses the reaction a quinone + NADH + H(+) = a quinol + NAD(+). It carries out the reaction a quinone + NADPH + H(+) = a quinol + NADP(+). The polypeptide is NAD(P)H dehydrogenase (quinone) (Brucella suis (strain ATCC 23445 / NCTC 10510)).